A 169-amino-acid polypeptide reads, in one-letter code: MYTSGYANRSSSFPTTTHNAARTATENAAAGLVSEVVYHEDQPMMAQLLLLPLLRQLGQQSRWQLWLTPQQKLSREWVQSSGLPLTKVMQISQLAPRHTLESMIRALRTGNYSVVIGWMTEELTEEEHASLVEAAKVGNAVGFIMHPVRAHALPRRQHSGLKIHSNLYH.

The interval Ala106–Tyr112 is ftsZ binding. Residues Lys162–His169 are lon protease binding.

This sequence belongs to the SulA family. As to quaternary structure, interacts with FtsZ. Is rapidly cleaved and degraded by the Lon protease once DNA damage is repaired.

Component of the SOS system and an inhibitor of cell division. Accumulation of SulA causes rapid cessation of cell division and the appearance of long, non-septate filaments. In the presence of GTP, binds a polymerization-competent form of FtsZ in a 1:1 ratio, thus inhibiting FtsZ polymerization and therefore preventing it from participating in the assembly of the Z ring. This mechanism prevents the premature segregation of damaged DNA to daughter cells during cell division. The sequence is that of Cell division inhibitor SulA from Salmonella choleraesuis (strain SC-B67).